Reading from the N-terminus, the 337-residue chain is Large ribosomal subunit protein uL3 (337 aa).

The interval 1 to 20 (MASIHRPKRGSLAFSPRKRA) is disordered.

This sequence belongs to the universal ribosomal protein uL3 family. Part of the 50S ribosomal subunit. Forms a cluster with proteins L14 and L24e.

In terms of biological role, one of the primary rRNA binding proteins, it binds directly near the 3'-end of the 23S rRNA, where it nucleates assembly of the 50S subunit. The chain is Large ribosomal subunit protein uL3 from Methanosarcina acetivorans (strain ATCC 35395 / DSM 2834 / JCM 12185 / C2A).